The chain runs to 4059 residues: Fibrocystin (4059 aa).

The first 18 residues, 1 to 18, serve as a signal peptide directing secretion; sequence MMLAWLVSLLSMEVLLLA. Residues 19–3851 lie on the Extracellular side of the membrane; it reads KPYSSFQFEP…LPVASKERST (3833 aa). Residues 25 to 109 form the IPT/TIG 1; atypical domain; it reads QFEPAEGSLA…AGPYSLEMRS (85 aa). Asn55 and Asn224 each carry an N-linked (GlcNAc...) asparagine glycan. IPT/TIG domains are found at residues 135-230 and 257-333; these read PVLY…FSVF and PEIL…FEVG. Residues 323–483 form the PA14 domain; sequence AGNRGLRFEV…TWLNPDVVNT (161 aa). N-linked (GlcNAc...) asparagine glycans are attached at residues Asn355, Asn385, Asn518, Asn527, Asn620, Asn639, Asn709, Asn867, Asn965, Asn975, Asn1082, Asn1114, Asn1133, Asn1239, Asn1273, Asn1308, Asn1319, Asn1344, Asn1373, Asn1456, Asn1471, Asn1528, Asn1613, Asn1627, Asn1694, Asn1760, Asn1775, Asn1875, Asn1879, Asn1915, Asn1955, Asn2030, and Asn2139. 2 IPT/TIG domains span residues 945 to 997 and 1017 to 1100; these read LVHF…FMLV and PRLD…AFTY. Residues 1106 to 1190 form the IPT/TIG 6; atypical domain; that stretch reads PVIVSLSRNR…IRSQGVDLYI (85 aa). Positions 1198–1266 constitute an IPT/TIG 7 domain; sequence SVEPCSGSLL…RADVLTVLAS (69 aa). The 82-residue stretch at 1297–1378 folds into the IPT/TIG 8; atypical domain; that stretch reads PVVTAMWGEF…MGFANMSVVP (82 aa). One can recognise an IPT/TIG 9 domain in the interval 1385 to 1466; it reads PQIIAIFPTH…ITVLVNGLTS (82 aa). IPT/TIG domains lie at 1482–1566 and 1569–1637; these read PIVD…RNFF and PQVL…IDVN. In terms of domain architecture, IPT/TIG 12; atypical spans 1654 to 1738; sequence PELLSVSRSQ…VLRATVTSVT (85 aa). The G8 1 domain maps to 1928–2049; sequence HSWFPQRVPH…PEVTVTYLQA (122 aa). PbH1 repeat units follow at residues 2244–2266 and 2287–2321; these read TWGL…LLGS and EQGS…YTFS. Asn2380 carries an N-linked (GlcNAc...) asparagine glycan. PbH1 repeat units follow at residues 2404–2426 and 2459–2481; these read SNNL…DILE and RWEL…AIRT. 9 N-linked (GlcNAc...) asparagine glycosylation sites follow: Asn2466, Asn2503, Asn2529, Asn2547, Asn2581, Asn2589, Asn2627, Asn2747, and Asn2762. The G8 2 domain occupies 2741–2867; the sequence is KGWGGYNHTI…PKKSWVHLGA (127 aa). 2 PbH1 repeats span residues 3004 to 3026 and 3027 to 3049; these read SAGS…HASS and SHGV…DVEG. Asn3051 carries an N-linked (GlcNAc...) asparagine glycan. A PbH1 7 repeat occupies 3080–3102; the sequence is AEDIILHGNVVAGSERLGFHVGG. Asn3133 and Asn3162 each carry an N-linked (GlcNAc...) asparagine glycan. The PbH1 8 repeat unit spans residues 3188 to 3212; sequence TVQITLRNSVIVATSSSFDCIHDRK. 3 N-linked (GlcNAc...) asparagine glycosylation sites follow: Asn3218, Asn3719, and Asn3831. The helical transmembrane segment at 3852-3872 threads the bilayer; it reads IILALSLCSVASWVALSCLVC. Positions 3869–3886 are ciliary targeting sequence (CST); the sequence is CLVCCWFKKSKTRKIKPE. Topologically, residues 3873 to 4059 are cytoplasmic; that stretch reads CWFKKSKTRK…LHTAPPETIQ (187 aa). Basic and acidic residues predominate over residues 3885–3898; sequence PEDISESQAKEQKK. Residues 3885–3915 form a disordered region; it reads PEDISESQAKEQKKNTHNSSKPRGLQAKTAK. The segment at 3946–3970 is nuclear localization signal (NLS); the sequence is KRKVSRLAVTEERTTTPAPKIPRIT. The interval 4015-4038 is disordered; it reads QERKQGQEPSQLDKGSDCTGLSQE.

As to quaternary structure, interacts with CAMLG. Interacts with PKD2. Interacts (via CST) with ARF4; this interaction allows an efficient PKHD1 trafficking to the cilium. Interacts (via CST) with RAB8A; this interaction controls trafficking through the endomembrane systeme and to the cilium. Interacts (via CST) with TULP3; this interaction allows PKHD1 trafficking to the cilium. Palmitoylated. Palmitoylation facilitates the trafficking to the cilia and membrane targeting. In terms of processing, N-glycosylated. Post-translationally, several proteolytic cleavages occur within the extracellular domain, whereas at least one cleavage occurs within the cytoplasmic domain. Cleaved by a probable proprotein convertase which produces an extracellular domain (polyductin extracellular domain, (PECD)) and a C-terminal fragment (polyductin transmembrane fragment (PTM)) which are tethered together by disulfide bonds. This extracellular domain (PECD) is then shed from the primary cilium by activation of a member of the ADAM metalloproteinase disintegrins family, resulting in concomitant release of an intra-cellular C-terminal fragment (ICD) via a gamma-secretase-dependent process. The proteolytic cleavage of the C-terminal intracellular fragment (ICD) is controlled by cytosolic calcium concentration and activation of PKC. Expressed in bile ducts and distal nephron segments but is absent from the proximal tubule. Expressed in pancreas and kidney but also in the liver. Expressed primarily in the distal tubule and thick ascending limb of the loop of Henle, and at low-level in the proximal tubule before renal development is complete at P0.

Its subcellular location is the cell membrane. The protein localises to the cytoplasm. It localises to the apical cell membrane. The protein resides in the cytoskeleton. It is found in the cilium basal body. Its subcellular location is the cell projection. The protein localises to the cilium. It localises to the spindle. The protein resides in the chromosome. It is found in the centromere. Its subcellular location is the nucleus. The protein localises to the secreted. It localises to the extracellular exosome. The protein resides in the endoplasmic reticulum. It is found in the golgi apparatus. Its function is as follows. Promotes ciliogenesis in renal epithelial cells and therefore participates in the tubules formation and/or ensures the maintenance of the architecture of the lumen of the kidney. Has an impact on cellular symmetry by ensuring correct bipolar cell division through the regulation of centrosome duplication and mitotic spindle assembly and by maintaining oriented cell division (OCD) during tubular elongation through planar cell polarity (PCP) pathway. During epithelial cell morphogenesis, it also regulates cell-cell and cell-matrix adhesion and participates in cell motility. Promotes cell-cell contact through the positive regulation of PTK2 kinase activity leading to either positive regulation of epithelial cell proliferation through the HRAS/RAF1 pathways, or negative regulation of apoptosis through the PDK1/AKT1 pathway. May act in collecting-duct and biliary differentiation. May participate in the regulation of the cholangiocytes proliferation and the CCN2 production in an CXCL8-dependent manner. In Mus musculus (Mouse), this protein is Fibrocystin.